A 216-amino-acid chain; its full sequence is LexA repressor (216 aa).

Positions 28 to 48 form a DNA-binding region, H-T-H motif; it reads RAEIAAEFGFSSPNAAEEHLR. Catalysis depends on for autocatalytic cleavage activity residues serine 134 and lysine 171.

It belongs to the peptidase S24 family. In terms of assembly, homodimer.

The catalysed reaction is Hydrolysis of Ala-|-Gly bond in repressor LexA.. Represses a number of genes involved in the response to DNA damage (SOS response), including recA and lexA. In the presence of single-stranded DNA, RecA interacts with LexA causing an autocatalytic cleavage which disrupts the DNA-binding part of LexA, leading to derepression of the SOS regulon and eventually DNA repair. In Ralstonia pickettii (strain 12J), this protein is LexA repressor.